The sequence spans 535 residues: Protein translocase subunit SecD (535 aa).

The next 6 helical transmembrane spans lie at 5–25 (LTWK…GIIG), 377–397 (AIIG…GAGI), 402–421 (SLLL…GAVL), 425–444 (GIAG…VLIF), 469–489 (WLTI…LFLF), and 496–516 (GFAV…VFVS).

It belongs to the SecD/SecF family. SecD subfamily. As to quaternary structure, forms a complex with SecF. Part of the essential Sec protein translocation apparatus which comprises SecA, SecYEG and auxiliary proteins SecDF. Other proteins may also be involved.

It is found in the cell inner membrane. Functionally, part of the Sec protein translocase complex. Interacts with the SecYEG preprotein conducting channel. SecDF uses the proton motive force (PMF) to complete protein translocation after the ATP-dependent function of SecA. This is Protein translocase subunit SecD from Koribacter versatilis (strain Ellin345).